We begin with the raw amino-acid sequence, 207 residues long: Large ribosomal subunit protein bL25 (207 aa).

Positions 171–207 are disordered; it reads EEETVVTVSAPRAEEEPTTTEAPEPEAVHGNDEEPVE. The segment covering 196–207 has biased composition (basic and acidic residues); it reads EAVHGNDEEPVE.

This sequence belongs to the bacterial ribosomal protein bL25 family. CTC subfamily. As to quaternary structure, part of the 50S ribosomal subunit; part of the 5S rRNA/L5/L18/L25 subcomplex. Contacts the 5S rRNA. Binds to the 5S rRNA independently of L5 and L18.

Functionally, this is one of the proteins that binds to the 5S RNA in the ribosome where it forms part of the central protuberance. The sequence is that of Large ribosomal subunit protein bL25 from Listeria innocua serovar 6a (strain ATCC BAA-680 / CLIP 11262).